We begin with the raw amino-acid sequence, 97 residues long: MDKREEGTVEEPLDLIRLSLDERIFVKMRQDRELRGKLHAYDQHLNMILSDVEETIKVVEKDEETDEEIIRNIKRNIKMLFVRGDGVILISPPLRTS.

The 86-residue stretch at 11-96 (EPLDLIRLSL…VILISPPLRT (86 aa)) folds into the Sm domain.

It belongs to the snRNP Sm proteins family. As to quaternary structure, component of the precatalytic spliceosome (spliceosome B complex). Component of the U4/U6-U5 tri-snRNP complex, a building block of the precatalytic spliceosome (spliceosome B complex). LSM2, LSM3, LSM4, LSM5, LSM6, LSM7 and LSM8 form a heptameric, ring-shaped subcomplex (the LSM2-8 complex) that is part of the U4/U6-U5 tri-snRNP complex and the precatalytic spliceosome.

The protein resides in the nucleus. In terms of biological role, plays a role in pre-mRNA splicing as component of the U4/U6-U5 tri-snRNP complex that is involved in spliceosome assembly, and as component of the precatalytic spliceosome (spliceosome B complex). The heptameric LSM2-8 complex binds specifically to the 3'-terminal U-tract of U6 snRNA. In Dictyostelium discoideum (Social amoeba), this protein is Probable U6 snRNA-associated Sm-like protein LSm3 (lsm3).